The primary structure comprises 365 residues: MFNRKLMECSDDEFVRGSQCDEEDEEEQQRQSSQRPPFYENMRTFAPSHMHISCHYDIPYPPHLIQPPVCGVSTFTYAREFPVSNSQQFFNVTPPQQQQQQGTGGSGEEDYCIPKSEDRDHSSNYSQVATKQDRPFVFFASDCQSPLEIVGEVYCTVPGRTSLLSSTTKYRVTVAEIQRRISPPECLNASLLGGILRKAKSKDGGKTLRDSLKKLGLTLPAGRRKQANVTAWTALVEEEAIHMAKEFALVCEKEFHSREIGIYLTKTSLAIDPDVVKRRTALEMSRKVVGELAELLSCDRTPLTPYFPRNMLPIDPSVQQHLSHFTLMTHGFGNVAMSAVLESVKLMIDESIKYIDRCCSQNVWR.

2 disordered regions span residues 13–40 (EFVRGSQCDEEDEEEQQRQSSQRPPFYE) and 93–126 (TPPQQQQQQGTGGSGEEDYCIPKSEDRDHSSNYS). An H-S-H (helix-span-helix), dimerization region spans residues 223–356 (RRKQANVTAW…MIDESIKYID (134 aa)).

The protein belongs to the AP-2 family. As to quaternary structure, binds DNA as a dimer. In terms of tissue distribution, expressed in five interneurons AIB, RIB and RIS.

It is found in the nucleus. Its function is as follows. Transcription factor, which is required in the single sleep-active ring interneuron RIS for sleep-like behavioral quiescence induced by neuropeptide signaling in larvae. Regulates gene expression of sleep-inducing FMRFamide-like neuropeptide flp-11 in RIS. This chain is Transcription factor aptf-1, found in Caenorhabditis elegans.